The chain runs to 217 residues: 3,4-dihydroxy-2-butanone 4-phosphate synthase (217 aa).

Residues 37–38 (RE), Asp42, 150–154 (RRGHT), and Glu174 contribute to the D-ribulose 5-phosphate site. Residue Glu38 participates in Mg(2+) binding. A Mg(2+)-binding site is contributed by His153.

Belongs to the DHBP synthase family. Homodimer. It depends on Mg(2+) as a cofactor. Mn(2+) is required as a cofactor.

It carries out the reaction D-ribulose 5-phosphate = (2S)-2-hydroxy-3-oxobutyl phosphate + formate + H(+). It functions in the pathway cofactor biosynthesis; riboflavin biosynthesis; 2-hydroxy-3-oxobutyl phosphate from D-ribulose 5-phosphate: step 1/1. Its function is as follows. Catalyzes the conversion of D-ribulose 5-phosphate to formate and 3,4-dihydroxy-2-butanone 4-phosphate. This chain is 3,4-dihydroxy-2-butanone 4-phosphate synthase, found in Shewanella baltica (strain OS155 / ATCC BAA-1091).